A 99-amino-acid polypeptide reads, in one-letter code: Small ribosomal subunit protein bS18 (99 aa).

Positions 1 to 25 (MAEDHPSVDLDTHLSSPRESEESAP) are enriched in basic and acidic residues. Residues 1-28 (MAEDHPSVDLDTHLSSPRESEESAPKKN) form a disordered region.

This sequence belongs to the bacterial ribosomal protein bS18 family. Part of the 30S ribosomal subunit. Forms a tight heterodimer with protein bS6.

Functionally, binds as a heterodimer with protein bS6 to the central domain of the 16S rRNA, where it helps stabilize the platform of the 30S subunit. In Treponema pallidum (strain Nichols), this protein is Small ribosomal subunit protein bS18.